We begin with the raw amino-acid sequence, 183 residues long: Calcineurin subunit B type 2 (183 aa).

The N-myristoyl glycine moiety is linked to residue G2. EF-hand domains are found at residues 25–60 (REIK…SMNP), 64–92 (RIIS…FHPK), 94–129 (DKAD…MVGS), and 135–170 (QISS…SGCN). Positions 107, 109, 111, and 118 each coordinate Ca(2+).

The protein belongs to the calcineurin regulatory subunit family. Calcineurin is composed of a catalytic subunit (A) and a regulatory subunit (B).

Its function is as follows. Regulatory subunit of calcineurin, a calcium-dependent, calmodulin stimulated protein phosphatase. Confers calcium sensitivity. The chain is Calcineurin subunit B type 2 (cnbB) from Dictyostelium discoideum (Social amoeba).